The sequence spans 237 residues: Arginine-binding periplasmic protein (237 aa).

Residues 1-18 (MKKTLLTLLFGCVVTAQA) form the signal peptide.

The protein belongs to the bacterial solute-binding protein 3 family.

The protein resides in the periplasm. In terms of biological role, binds arginine; part of the arginine periplasmic transport system. The protein is Arginine-binding periplasmic protein (lapT) of Mannheimia haemolytica (Pasteurella haemolytica).